Here is a 186-residue protein sequence, read N- to C-terminus: ADP-ribosylation factor-like protein 8B (186 aa).

An intramembrane region (note=Mediates targeting to membranes) is located at residues 1-19 (MLALISRLLDWFRSLFWKE). GTP-binding positions include 29 to 35 (QYSGKTT), 71 to 75 (DIGGQ), and 130 to 133 (NKRD). Lysine 141 participates in a covalent cross-link: Glycyl lysine isopeptide (Lys-Gly) (interchain with G-Cter in ubiquitin).

The protein belongs to the small GTPase superfamily. Arf family. As to quaternary structure, interacts with tubulin. Interacts with BORCS5; recruits ARL8B to lysosomes. Interacts with VPS41; the interaction mediates the recruitment of the HOPS complex to lysosomes. Interacts (GTP-bound form) with PLEKHM2 (via RUN domain); the interaction is required to recruit the motor protein kinesin-1 on lysosomes. Interacts (GTP-bound form) with PLEKHM1 (via RUN domain); the interaction is required for PLEKHM1 localization to lysosomes and for ARL8B function in delivery and degradation of endocytic and autophagic cargo in lysosomes. PLEKHM1 and PLEKHM2 compete for interaction with ARL8B. Interacts (GTP-bound form) with RUFY1; the interaction is required for RUFY1 endosomal location. When GTP-bound, interacts with RUFY3 and RUFY4, but not with RUFY1, nor RUFY2. In terms of processing, ubiquitinated at Lys-141 by RNF167, leading to its degradation.

It is found in the late endosome membrane. The protein resides in the lysosome membrane. The protein localises to the cytoplasm. Its subcellular location is the cytoskeleton. It localises to the spindle. It is found in the cell projection. The protein resides in the axon. The protein localises to the synapse. Its subcellular location is the cytolytic granule membrane. It localises to the early endosome membrane. The enzyme catalyses GTP + H2O = GDP + phosphate + H(+). Its function is as follows. Small GTPase which cycles between active GTP-bound and inactive GDP-bound states. In its active state, binds to a variety of effector proteins playing a key role in the regulation of lysosomal positioning which is important for nutrient sensing, natural killer cell-mediated cytotoxicity and antigen presentation. Along with its effectors, orchestrates lysosomal transport and fusion. Localizes specifically to lysosomal membranes and mediates anterograde lysosomal motility by recruiting PLEKHM2, which in turn recruits the motor protein kinesin-1 on lysosomes. Required for lysosomal and cytolytic granule exocytosis. Critical factor involved in NK cell-mediated cytotoxicity. Drives the polarization of cytolytic granules and microtubule-organizing centers (MTOCs) toward the immune synapse between effector NK lymphocytes and target cells. In neurons, mediates the anterograde axonal long-range transport of presynaptic lysosome-related vesicles required for presynaptic biogenesis and synaptic function. Also acts as a regulator of endosome to lysosome trafficking pathways of special significance for host defense. Recruits RUFY1 onto early endosomes regulating endosomes to trans-Golgi network proteins retrieval. Regulates cargo trafficking to lysosomes by binding to PLEKHM1 and recruiting the HOPS subunit VPS41, resulting in functional assembly of the HOPS complex on lysosomal membranes. Plays an important role in cargo delivery to lysosomes for antigen presentation and microbial killing. Directs the intersection of CD1d with lipid antigens in lysosomes, and plays a role in intersecting phagosomes with lysosomes to generate phagolysosomes that kill microbes. Involved in the process of MHC II presentation. Regulates the delivery of antigens to lysosomes and the formation of MHC II-peptide complexes through the recruitment of the HOPS complex to lysosomes allowing the fusion of late endosomes to lysosomes. May play a role in chromosome segregation. The chain is ADP-ribosylation factor-like protein 8B (ARL8B) from Bos taurus (Bovine).